The following is a 211-amino-acid chain: Metalloproteinase inhibitor 3 (211 aa).

The N-terminal stretch at 1–23 is a signal peptide; sequence MTPWLGLVVLLSCWSLGHWGTEA. Cys24 is a Zn(2+) binding site. 2 involved in metalloproteinase-binding regions span residues 24 to 27 and 88 to 89; these read CTCS and ES. 6 disulfide bridges follow: Cys24-Cys91, Cys26-Cys118, Cys36-Cys143, Cys145-Cys192, Cys150-Cys155, and Cys163-Cys184. One can recognise an NTR domain in the interval 24 to 143; the sequence is CTCSPSHPQD…GLNYRYHLGC (120 aa). The segment at 105–188 is mediates interaction with EFEMP1; that stretch reads TGRVYEGKMY…SKHYACIRQK (84 aa).

This sequence belongs to the protease inhibitor I35 (TIMP) family. As to quaternary structure, interacts with EFEMP1. Interacts with KDR.

The protein resides in the secreted. It localises to the extracellular space. It is found in the extracellular matrix. Its function is as follows. Mediates a variety of processes including matrix regulation and turnover, inflammation, and angiogenesis, through reversible inhibition of zinc protease superfamily enzymes, primarily matrix metalloproteinases (MMPs). Regulates extracellular matrix (ECM) remodeling through inhibition of matrix metalloproteinases (MMP) including MMP-1, MMP-2, MMP-3, MMP-7, MMP-9, MMP-13, MMP-14 and MMP-15. Additionally, modulates the processing of amyloid precursor protein (APP) and apolipoprotein E receptor ApoER2 by inhibiting two alpha-secretases ADAM10 and ADAM17. Functions as a tumor suppressor and a potent inhibitor of angiogenesis. Exerts its anti-angiogenic effect by directly interacting with vascular endothelial growth factor (VEGF) receptor-2/KDR, preventing its binding to the VEGFA ligand. Selectively induces apoptosis in angiogenic endothelial cells through a caspase-independent cell death pathway. Mechanistically, inhibits matrix-induced focal adhesion kinase PTK2 tyrosine phosphorylation and association with paxillin/PXN and disrupts the incorporation of ITGB3, PTK2 and PXN into focal adhesion contacts on the matrix. The polypeptide is Metalloproteinase inhibitor 3 (Timp3) (Rattus norvegicus (Rat)).